The sequence spans 203 residues: HTH-type transcriptional regulator CymR (203 aa).

The HTH tetR-type domain occupies 13–73; the sequence is METQGKLIAA…ATFEWLYEQI (61 aa). A DNA-binding region (H-T-H motif) is located at residues 36–55; sequence RIADVPGAAGVSRGAQSHHF.

Involved in the repression of the cym and cmt operons which are responsible of the p-cymene degradation. This Pseudomonas putida (Arthrobacter siderocapsulatus) protein is HTH-type transcriptional regulator CymR.